The following is a 127-amino-acid chain: Large-conductance mechanosensitive channel (127 aa).

3 helical membrane passes run 8–28 (FAFKGNVLDLAIGVIIGAAFG), 30–50 (IVTALVDVVIMPIISIILSLI), and 70–90 (IGVLIKTIIEFLIIAFVLFLF).

This sequence belongs to the MscL family. In terms of assembly, homopentamer.

The protein localises to the cell membrane. Channel that opens in response to stretch forces in the membrane lipid bilayer. May participate in the regulation of osmotic pressure changes within the cell. The protein is Large-conductance mechanosensitive channel of Herpetosiphon aurantiacus (strain ATCC 23779 / DSM 785 / 114-95).